The sequence spans 265 residues: MNTYAQESKLRLKTKIGADGRCVIEDNFFTPPFKLMAPFYPKDDLAEIMLLAVSPGLMKGDAQDVQLNIGPNCKLRITSQSFEKIHNTEDGFASRDMHIVVGENAFLDFAPFPLIPFENAHFKGNTTISLRSSSQLLYSEIIVAGRVACNELFQFNRLHTKISILQDEKPIYYDNTILDPKTTDMMNMCMFDGYTHYLNLVLVNCPIELSGVRGLIEESEGVDGAVSEIASSHLCVKALAKGSEPLLHLREKIARLITQTITPKI.

This sequence belongs to the UreD family. In terms of assembly, ureH, UreF and UreG form a complex that acts as a GTP-hydrolysis-dependent molecular chaperone, activating the urease apoprotein by helping to assemble the nickel containing metallocenter of UreC. The UreE protein probably delivers the nickel.

The protein localises to the cytoplasm. Required for maturation of urease via the functional incorporation of the urease nickel metallocenter. In Helicobacter pylori (strain HPAG1), this protein is Urease accessory protein UreH.